A 93-amino-acid chain; its full sequence is Putative pterin-4-alpha-carbinolamine dehydratase (93 aa).

The protein belongs to the pterin-4-alpha-carbinolamine dehydratase family.

It catalyses the reaction (4aS,6R)-4a-hydroxy-L-erythro-5,6,7,8-tetrahydrobiopterin = (6R)-L-erythro-6,7-dihydrobiopterin + H2O. The sequence is that of Putative pterin-4-alpha-carbinolamine dehydratase from Roseiflexus castenholzii (strain DSM 13941 / HLO8).